A 119-amino-acid polypeptide reads, in one-letter code: Large ribosomal subunit protein uL18 (119 aa).

Belongs to the universal ribosomal protein uL18 family. In terms of assembly, part of the 50S ribosomal subunit; part of the 5S rRNA/L5/L18/L25 subcomplex. Contacts the 5S and 23S rRNAs.

Functionally, this is one of the proteins that bind and probably mediate the attachment of the 5S RNA into the large ribosomal subunit, where it forms part of the central protuberance. This chain is Large ribosomal subunit protein uL18, found in Clostridium botulinum (strain Alaska E43 / Type E3).